The following is a 236-amino-acid chain: TVP38/TMEM64 family membrane protein YdjX (236 aa).

A run of 5 helical transmembrane segments spans residues 7-27, 50-70, 72-92, 156-176, and 192-212; these read FLFACLIFALVIYAIHAFGLF, LYILLFIIATLLLLPGSILVI, GGIVFGPLLGTLLSLIAATLA, IAFWPYTLISALTTLPGIVIY, and FILQLCLAGLALFILVQLAKL. The VTT domain stretch occupies residues 73-183; it reads GIVFGPLLGT…VIYTVMASDL (111 aa).

It belongs to the TVP38/TMEM64 family.

Its subcellular location is the cell membrane. This is TVP38/TMEM64 family membrane protein YdjX (ydjX) from Escherichia coli (strain K12).